The primary structure comprises 1020 residues: Sodium/potassium-transporting ATPase subunit alpha-2 (1020 aa).

The propeptide occupies 1-5 (MGRGA). The disordered stretch occupies residues 1-31 (MGRGAGREYSPAATTAENGGGKKKQKEKELD). Residues 6–85 (GREYSPAATT…NALTPPPTTP (80 aa)) are Cytoplasmic-facing. Ser-10 bears the Phosphoserine mark. The interval 80 to 82 (PPP) is interaction with phosphoinositide-3 kinase. Residues 86 to 106 (EWVKFCRQLFGGFSILLWIGA) form a helical membrane-spanning segment. Residues 107–129 (ILCFLAYGIQAAMEDEPSNDNLY) are Extracellular-facing. A helical membrane pass occupies residues 130 to 150 (LGVVLAAVVIVTGCFSYYQEA). The Cytoplasmic portion of the chain corresponds to 151-286 (KSSKIMDSFK…VGRTPIAMEI (136 aa)). Over residues 212 to 227 (DNSSLTGESEPQTRSP) the composition is skewed to polar residues. Positions 212-231 (DNSSLTGESEPQTRSPEFTH) are disordered. A helical membrane pass occupies residues 287–306 (EHFIQLITGVAVFPGVSFFV). Over 307–318 (LSLILGYSWLEA) the chain is Extracellular. Residues 319 to 336 (VIFLIGIIVANVPEGLLA) form a helical membrane-spanning segment. Topologically, residues 337–769 (TVTVCLTLTA…EEGRLVFDNL (433 aa)) are cytoplasmic. Residue Asp-374 is the 4-aspartylphosphate intermediate of the active site. A phosphoserine mark is found at Ser-439, Ser-450, Ser-496, and Ser-559. Thr-570 carries the phosphothreonine modification. A phosphoserine mark is found at Ser-587 and Ser-672. Residues Asp-714 and Asp-718 each coordinate Mg(2+). Residues 770–789 (KKSIAYTLTSNIPEITPFLL) form a helical membrane-spanning segment. The Extracellular segment spans residues 790-799 (FIIANIPLPL). The chain crosses the membrane as a helical span at residues 800 to 820 (GTVTILCIDLGTDMVPAISLA). Residues 821–840 (YEAAESDIMKRQPRNSQTDK) lie on the Cytoplasmic side of the membrane. Residue Ser-826 is modified to Phosphoserine. The helical transmembrane segment at 841-863 (LVNERLISMAYGQIGMIQALGGF) threads the bilayer. The Extracellular portion of the chain corresponds to 864–915 (FTYFVILAENGFLPSRLLGIRLDWDDRTMNDLEDSYGQEWTYEQRKVVEFTC). A helical membrane pass occupies residues 916–935 (HTAFFASIVVVQWADLIICK). The Cytoplasmic portion of the chain corresponds to 936 to 948 (TRRNSVFQQGMKN). A Phosphoserine; by PKA modification is found at Ser-940. Residues 949–967 (KILIFGLLEETALAAFLSY) traverse the membrane as a helical segment. The Extracellular portion of the chain corresponds to 968 to 982 (CPGMGVALRMYPLKV). A helical transmembrane segment spans residues 983 to 1003 (TWWFCAFPYSLLIFIYDEVRK). The Cytoplasmic portion of the chain corresponds to 1004–1020 (LILRRYPGGWVEKETYY).

It belongs to the cation transport ATPase (P-type) (TC 3.A.3) family. Type IIC subfamily. In terms of assembly, the sodium/potassium-transporting ATPase is composed of a catalytic alpha subunit, an auxiliary non-catalytic beta subunit and an additional regulatory subunit. Interacts with regulatory subunit FXYD1.

Its subcellular location is the membrane. It is found in the cell membrane. The catalysed reaction is K(+)(out) + Na(+)(in) + ATP + H2O = K(+)(in) + Na(+)(out) + ADP + phosphate + H(+). This is the catalytic component of the active enzyme, which catalyzes the hydrolysis of ATP coupled with the exchange of sodium and potassium ions across the plasma membrane. This action creates the electrochemical gradient of sodium and potassium, providing the energy for active transport of various nutrients. The polypeptide is Sodium/potassium-transporting ATPase subunit alpha-2 (ATP1A2) (Pongo abelii (Sumatran orangutan)).